The sequence spans 312 residues: Malate dehydrogenase (312 aa).

NAD(+) is bound by residues 12 to 17 (GAGFTG) and aspartate 36. The substrate site is built by arginine 87 and arginine 93. Residues asparagine 100 and 123-125 (LTN) each bind NAD(+). Asparagine 125 is a substrate binding site. Serine 149 bears the Phosphoserine mark. Residue arginine 156 participates in substrate binding. The Proton acceptor role is filled by histidine 180.

Belongs to the LDH/MDH superfamily. MDH type 3 family.

It catalyses the reaction (S)-malate + NAD(+) = oxaloacetate + NADH + H(+). In terms of biological role, catalyzes the reversible oxidation of malate to oxaloacetate. In Geobacillus thermodenitrificans (strain NG80-2), this protein is Malate dehydrogenase.